The sequence spans 238 residues: LexA repressor (238 aa).

A DNA-binding region (H-T-H motif) is located at residues 26–46 (FDEMKDALELRSKSGIHRLIS). Catalysis depends on for autocatalytic cleavage activity residues Ser159 and Lys197.

This sequence belongs to the peptidase S24 family. As to quaternary structure, homodimer.

It carries out the reaction Hydrolysis of Ala-|-Gly bond in repressor LexA.. Functionally, represses a number of genes involved in the response to DNA damage (SOS response), including recA and lexA. In the presence of single-stranded DNA, RecA interacts with LexA causing an autocatalytic cleavage which disrupts the DNA-binding part of LexA, leading to derepression of the SOS regulon and eventually DNA repair. This chain is LexA repressor, found in Gluconobacter oxydans (strain 621H) (Gluconobacter suboxydans).